The primary structure comprises 59 residues: Mu-conotoxin SrVA (59 aa).

The N-terminal stretch at 1 to 22 is a signal peptide; that stretch reads MRCLPVFVILLLLIASAPSVDA. The propeptide occupies 23 to 44; sequence QLKTKDDVPLASFHDNAKGTQH. Intrachain disulfides connect C51/C58 and C52/C59.

This sequence belongs to the conotoxin T superfamily. As to expression, expressed by the venom duct.

The protein localises to the secreted. In terms of biological role, mu-conotoxins block voltage-gated sodium channels. This peptide inhibits the cardiac sodium channel hNav1.5/SCN5A (33% inhibition at 200 nM, 50% at 400 nM, and 55% at 600 nM). Does not interfere with the voltage-dependence of activation, but affects the voltage-dependence of inactivation of hNav1.5. In vivo, intracranial injection into 9-day-old mice causes transient symptoms, including extension of the body and clockwise and counter-clockwise turns, that last 3 to 4 minutes. Intracranial injection into 16-day-old mice, causes transient symptoms, including agitated breathing and occasional turning followed by scratching and grooming behavior, that last for 15-19 minutes. In Conus spurius (Alphabet cone), this protein is Mu-conotoxin SrVA.